Consider the following 291-residue polypeptide: Hydroxysteroid 11-beta-dehydrogenase 1-like protein B (291 aa).

Positions 1-17 (MAGVILLLLSLCVGYIA) are cleaved as a signal peptide. NADP(+) contacts are provided by residues 40 to 66 (GSST…TARR), 91 to 92 (DM), and 118 to 120 (NHI). Serine 170 contributes to the substrate binding site. Tyrosine 183 (proton acceptor) is an active-site residue. NADP(+)-binding positions include 183 to 187 (YCASK) and 216 to 222 (GYIDTEN).

The protein belongs to the short-chain dehydrogenases/reductases (SDR) family.

It localises to the secreted. It carries out the reaction cortisone + NADPH + H(+) = cortisol + NADP(+). Unidirectional NADP(+)-dependent cortisol dehydrogenase (in vitro). This chain is Hydroxysteroid 11-beta-dehydrogenase 1-like protein B (hsd11b1l-b), found in Xenopus laevis (African clawed frog).